The sequence spans 656 residues: CoB--CoM heterodisulfide reductase iron-sulfur subunit A 2 (656 aa).

FAD is bound at residue 152-175 (GGGVSGIQAALDLADMGFEVILVE). 4Fe-4S ferredoxin-type domains are found at residues 238-269 (KKPR…FDEG), 286-315 (SVFT…FDQE), 577-606 (IVSE…LVEK), and 610-639 (LVAE…QNHF). Residues Cys-248, Cys-251, Cys-254, Cys-258, Cys-295, Cys-298, Cys-301, Cys-305, Cys-586, Cys-589, Cys-592, Cys-596, Cys-619, Cys-622, Cys-625, and Cys-629 each coordinate [4Fe-4S] cluster.

It belongs to the HdrA family. In terms of assembly, the ferredoxin:CoB-CoM heterodisulfide reductase is composed of three subunits; HdrA, HdrB and HdrC. It depends on [4Fe-4S] cluster as a cofactor. FAD serves as cofactor.

The protein operates within cofactor metabolism; coenzyme M-coenzyme B heterodisulfide reduction; coenzyme B and coenzyme M from coenzyme M-coenzyme B heterodisulfide: step 1/1. In terms of biological role, part of a complex that catalyzes the reversible reduction of CoM-S-S-CoB to the thiol-coenzymes H-S-CoM (coenzyme M) and H-S-CoB (coenzyme B). The protein is CoB--CoM heterodisulfide reductase iron-sulfur subunit A 2 (hdrA2) of Methanopyrus kandleri (strain AV19 / DSM 6324 / JCM 9639 / NBRC 100938).